Reading from the N-terminus, the 323-residue chain is GMP reductase (323 aa).

The active-site Thioimidate intermediate is cysteine 174. 203–226 is an NADP(+) binding site; the sequence is IIADGGIRHNGDIAKSVRFGASMV.

Belongs to the IMPDH/GMPR family. GuaC type 2 subfamily.

The catalysed reaction is IMP + NH4(+) + NADP(+) = GMP + NADPH + 2 H(+). Catalyzes the irreversible NADPH-dependent deamination of GMP to IMP. It functions in the conversion of nucleobase, nucleoside and nucleotide derivatives of G to A nucleotides, and in maintaining the intracellular balance of A and G nucleotides. This is GMP reductase from Oenococcus oeni (strain ATCC BAA-331 / PSU-1).